The following is a 456-amino-acid chain: Cobyrinate a,c-diamide synthase (456 aa).

Positions 247–439 constitute a GATase cobBQ-type domain; that stretch reads PIAIARDRAF…LHLHFGGKPW (193 aa). Residue Cys330 is the Nucleophile of the active site.

The protein belongs to the CobB/CbiA family. Requires Mg(2+) as cofactor.

It carries out the reaction cob(II)yrinate + 2 L-glutamine + 2 ATP + 2 H2O = cob(II)yrinate a,c diamide + 2 L-glutamate + 2 ADP + 2 phosphate + 2 H(+). The protein operates within cofactor biosynthesis; adenosylcobalamin biosynthesis; cob(II)yrinate a,c-diamide from sirohydrochlorin (anaerobic route): step 10/10. Its function is as follows. Catalyzes the ATP-dependent amidation of the two carboxylate groups at positions a and c of cobyrinate, using either L-glutamine or ammonia as the nitrogen source. This chain is Cobyrinate a,c-diamide synthase, found in Synechococcus sp. (strain ATCC 27144 / PCC 6301 / SAUG 1402/1) (Anacystis nidulans).